A 124-amino-acid polypeptide reads, in one-letter code: Aspartate 1-decarboxylase (124 aa).

The active-site Schiff-base intermediate with substrate; via pyruvic acid is the Ser-25. Pyruvic acid (Ser) is present on Ser-25. Thr-57 is a binding site for substrate. Tyr-58 acts as the Proton donor in catalysis. 73 to 75 (GAA) is a substrate binding site.

It belongs to the PanD family. Heterooctamer of four alpha and four beta subunits. Pyruvate serves as cofactor. Is synthesized initially as an inactive proenzyme, which is activated by self-cleavage at a specific serine bond to produce a beta-subunit with a hydroxyl group at its C-terminus and an alpha-subunit with a pyruvoyl group at its N-terminus.

The protein localises to the cytoplasm. The catalysed reaction is L-aspartate + H(+) = beta-alanine + CO2. Its pathway is cofactor biosynthesis; (R)-pantothenate biosynthesis; beta-alanine from L-aspartate: step 1/1. Catalyzes the pyruvoyl-dependent decarboxylation of aspartate to produce beta-alanine. This chain is Aspartate 1-decarboxylase, found in Syntrophobacter fumaroxidans (strain DSM 10017 / MPOB).